Consider the following 341-residue polypeptide: Glycerol-3-phosphate dehydrogenase [NAD(P)+] (341 aa).

The NADPH site is built by S14, F15, R35, and K108. 2 residues coordinate sn-glycerol 3-phosphate: K108 and G136. Position 140 (A140) interacts with NADPH. Positions 191, 244, 254, 255, and 256 each coordinate sn-glycerol 3-phosphate. The Proton acceptor role is filled by K191. Position 255 (R255) interacts with NADPH. 2 residues coordinate NADPH: V279 and E281.

Belongs to the NAD-dependent glycerol-3-phosphate dehydrogenase family.

It localises to the cytoplasm. The enzyme catalyses sn-glycerol 3-phosphate + NAD(+) = dihydroxyacetone phosphate + NADH + H(+). It catalyses the reaction sn-glycerol 3-phosphate + NADP(+) = dihydroxyacetone phosphate + NADPH + H(+). It participates in membrane lipid metabolism; glycerophospholipid metabolism. In terms of biological role, catalyzes the reduction of the glycolytic intermediate dihydroxyacetone phosphate (DHAP) to sn-glycerol 3-phosphate (G3P), the key precursor for phospholipid synthesis. This is Glycerol-3-phosphate dehydrogenase [NAD(P)+] from Pseudomonas fluorescens (strain ATCC BAA-477 / NRRL B-23932 / Pf-5).